Consider the following 456-residue polypeptide: Enolase (456 aa).

Gln-164 is a binding site for (2R)-2-phosphoglycerate. Residue Glu-207 is the Proton donor of the active site. Residues Asp-244, Glu-287, and Asp-314 each coordinate Mg(2+). Residues Lys-339, Arg-368, Ser-369, and Lys-390 each contribute to the (2R)-2-phosphoglycerate site. The Proton acceptor role is filled by Lys-339.

Belongs to the enolase family. In terms of assembly, component of the RNA degradosome, a multiprotein complex involved in RNA processing and mRNA degradation. It depends on Mg(2+) as a cofactor.

Its subcellular location is the cytoplasm. The protein localises to the secreted. It localises to the cell surface. The catalysed reaction is (2R)-2-phosphoglycerate = phosphoenolpyruvate + H2O. The protein operates within carbohydrate degradation; glycolysis; pyruvate from D-glyceraldehyde 3-phosphate: step 4/5. Functionally, catalyzes the reversible conversion of 2-phosphoglycerate (2-PG) into phosphoenolpyruvate (PEP). It is essential for the degradation of carbohydrates via glycolysis. The polypeptide is Enolase (Francisella tularensis subsp. holarctica (strain OSU18)).